We begin with the raw amino-acid sequence, 348 residues long: Dihydroorotase (348 aa).

Zn(2+) contacts are provided by His14 and His16. Residues 16–18 and Asn42 contribute to the substrate site; that span reads HLR. Residues Lys100, His137, and His175 each contribute to the Zn(2+) site. Residue Lys100 is modified to N6-carboxylysine. Residue His137 participates in substrate binding. Leu220 contacts substrate. A Zn(2+)-binding site is contributed by Asp248. The active site involves Asp248. The substrate site is built by His252 and Ala264.

Belongs to the metallo-dependent hydrolases superfamily. DHOase family. Class II DHOase subfamily. As to quaternary structure, homodimer. Zn(2+) is required as a cofactor.

The catalysed reaction is (S)-dihydroorotate + H2O = N-carbamoyl-L-aspartate + H(+). The protein operates within pyrimidine metabolism; UMP biosynthesis via de novo pathway; (S)-dihydroorotate from bicarbonate: step 3/3. In terms of biological role, catalyzes the reversible cyclization of carbamoyl aspartate to dihydroorotate. This Pseudomonas aeruginosa (strain ATCC 15692 / DSM 22644 / CIP 104116 / JCM 14847 / LMG 12228 / 1C / PRS 101 / PAO1) protein is Dihydroorotase.